The following is a 554-amino-acid chain: Tetratricopeptide repeat protein 34 (554 aa).

8 TPR repeats span residues Glu38–Ala71, Ser166–Asn199, Val200–Thr233, Pro294–Ser327, Glu328–Asp361, Asn411–Asp445, Ser452–Gln485, and Ala500–His533.

The chain is Tetratricopeptide repeat protein 34 (Ttc34) from Mus musculus (Mouse).